Consider the following 387-residue polypeptide: Arginine biosynthesis bifunctional protein ArgJ 2 (387 aa).

Substrate is bound by residues T147, K169, T180, E259, N382, and T387. The Nucleophile role is filled by T180.

The protein belongs to the ArgJ family. In terms of assembly, heterotetramer of two alpha and two beta chains.

The protein resides in the cytoplasm. The catalysed reaction is N(2)-acetyl-L-ornithine + L-glutamate = N-acetyl-L-glutamate + L-ornithine. The enzyme catalyses L-glutamate + acetyl-CoA = N-acetyl-L-glutamate + CoA + H(+). It functions in the pathway amino-acid biosynthesis; L-arginine biosynthesis; L-ornithine and N-acetyl-L-glutamate from L-glutamate and N(2)-acetyl-L-ornithine (cyclic): step 1/1. Its pathway is amino-acid biosynthesis; L-arginine biosynthesis; N(2)-acetyl-L-ornithine from L-glutamate: step 1/4. Functionally, catalyzes two activities which are involved in the cyclic version of arginine biosynthesis: the synthesis of N-acetylglutamate from glutamate and acetyl-CoA as the acetyl donor, and of ornithine by transacetylation between N(2)-acetylornithine and glutamate. The polypeptide is Arginine biosynthesis bifunctional protein ArgJ 2 (Nostoc sp. (strain PCC 7120 / SAG 25.82 / UTEX 2576)).